Reading from the N-terminus, the 131-residue chain is Profilin-2 (131 aa).

An intrachain disulfide couples Cys-13 to Cys-115. The short motif at 81–97 (AVIRGKKGPGGVTVKKT) is the Involved in PIP2 interaction element. Thr-111 bears the Phosphothreonine mark.

Belongs to the profilin family. As to quaternary structure, multimer. Occurs in many kinds of cells as a complex with monomeric actin in a 1:1 ratio. Phosphorylated by MAP kinases.

It is found in the cytoplasm. Its subcellular location is the cytoskeleton. Binds to actin and affects the structure of the cytoskeleton. At high concentrations, profilin prevents the polymerization of actin, whereas it enhances it at low concentrations. By binding to PIP2, it inhibits the formation of IP3 and DG. This chain is Profilin-2, found in Hevea brasiliensis (Para rubber tree).